Consider the following 843-residue polypeptide: Protein P (843 aa).

Positions 1-177 (MPLSYQHFRK…FCGSPYSWEQ (177 aa)) are terminal protein domain (TP). The spacer stretch occupies residues 178–346 (DLQHGRLVFQ…YCLSHIVNLI (169 aa)). 2 disordered regions span residues 219 to 249 (RKSRLGPQPTQGQLAGRPQGGSGSIRARIHP) and 290 to 316 (STSKGHSSSGHAVELHHFPPNSSRSQS). Residues 290–299 (STSKGHSSSG) show a composition bias toward polar residues. The tract at residues 347-690 (EDWGPCAEHG…YMTLYPVARQ (344 aa)) is polymerase/reverse transcriptase domain (RT). Positions 357–600 (EHRIRTPRTP…YSLNFMGYVI (244 aa)) constitute a Reverse transcriptase domain. Positions 429, 551, and 552 each coordinate Mg(2+).

Belongs to the hepadnaviridae P protein family.

The enzyme catalyses DNA(n) + a 2'-deoxyribonucleoside 5'-triphosphate = DNA(n+1) + diphosphate. It catalyses the reaction Endonucleolytic cleavage to 5'-phosphomonoester.. With respect to regulation, activated by host HSP70 and HSP40 in vitro to be able to bind the epsilon loop of the pgRNA. Because deletion of the RNase H region renders the protein partly chaperone-independent, the chaperones may be needed indirectly to relieve occlusion of the RNA-binding site by this domain. Inhibited by several reverse-transcriptase inhibitors: Lamivudine, Adefovir and Entecavir. Functionally, multifunctional enzyme that converts the viral RNA genome into dsDNA in viral cytoplasmic capsids. This enzyme displays a DNA polymerase activity that can copy either DNA or RNA templates, and a ribonuclease H (RNase H) activity that cleaves the RNA strand of RNA-DNA heteroduplexes in a partially processive 3'- to 5'-endonucleasic mode. Neo-synthesized pregenomic RNA (pgRNA) are encapsidated together with the P protein, and reverse-transcribed inside the nucleocapsid. Initiation of reverse-transcription occurs first by binding the epsilon loop on the pgRNA genome, and is initiated by protein priming, thereby the 5'-end of (-)DNA is covalently linked to P protein. Partial (+)DNA is synthesized from the (-)DNA template and generates the relaxed circular DNA (RC-DNA) genome. After budding and infection, the RC-DNA migrates in the nucleus, and is converted into a plasmid-like covalently closed circular DNA (cccDNA). The activity of P protein does not seem to be necessary for cccDNA generation, and is presumably released from (+)DNA by host nuclear DNA repair machinery. This is Protein P from Homo sapiens (Human).